The chain runs to 220 residues: Serine protease-like protein 51 (220 aa).

Positions 1-16 (MFQLLIPLLLALKGHA) are cleaved as a signal peptide. The region spanning 23–220 (VQCGHRPAFP…SSKWVSSVGA (198 aa)) is the Peptidase S1 domain. Asn33 carries N-linked (GlcNAc...) asparagine glycosylation. Residues Cys64 and Cys80 are joined by a disulfide bond. Asn92 carries an N-linked (GlcNAc...) asparagine glycan. Cys157 and Cys170 are disulfide-bonded.

Belongs to the peptidase S1 family.

Its subcellular location is the secreted. This is Serine protease-like protein 51 from Homo sapiens (Human).